The chain runs to 293 residues: F-box only protein 6 (293 aa).

An F-box domain is found at 10 to 57; the sequence is LDSINELPENILLELFTHVPARQLLLNCRLVCSLWRDLIDLMTLWKRK. Positions 78 to 259 constitute an FBA domain; sequence FYFLRSLHRN…VTNSSIVVSP (182 aa). At S258 the chain carries Phosphoserine. The span at 261-271 shows a compositional bias: polar residues; it reads MTRNQASSEAQ. Residues 261–285 form a disordered region; sequence MTRNQASSEAQPGQKHGQEEAAQSP. S284 bears the Phosphoserine mark.

In terms of assembly, interacts with VCP. Part of a SCF (SKP1-cullin-F-box) protein ligase complex. Interacts with CHEK1 and CUL1.

Its subcellular location is the cytoplasm. It participates in protein modification; protein ubiquitination. Substrate-recognition component of some SCF (SKP1-CUL1-F-box protein)-type E3 ubiquitin ligase complexes. Involved in endoplasmic reticulum-associated degradation pathway (ERAD) for misfolded lumenal proteins by recognizing and binding sugar chains on unfolded glycoproteins that are retrotranslocated into the cytosol and promoting their ubiquitination and subsequent degradation. Able to recognize and bind denatured glycoproteins, which are modified with not only high-mannose but also complex-type oligosaccharides. Also recognizes sulfated glycans. Also involved in DNA damage response by specifically recognizing activated CHEK1 (phosphorylated on 'Ser-345'), promoting its ubiquitination and degradation. Ubiquitination of CHEK1 is required to ensure that activated CHEK1 does not accumulate as cells progress through S phase, or when replication forks encounter transient impediments during normal DNA replication. In Homo sapiens (Human), this protein is F-box only protein 6 (FBXO6).